The chain runs to 907 residues: Avirulence protein A (907 aa).

Polar residues-rich tracts occupy residues 1 to 11 (MWNVSKSSNNL) and 124 to 136 (AGSN…SSDP). 2 disordered regions span residues 1–47 (MWNV…HDQL) and 116–157 (NDDF…KKSY).

The chain is Avirulence protein A (avrA) from Pseudomonas savastanoi pv. glycinea (Pseudomonas syringae pv. glycinea).